Reading from the N-terminus, the 718-residue chain is Auxin response factor 2 (718 aa).

Positions 1–24 (MVGIDLNTVEEEEDEEEGGATGTV) are disordered. Positions 8–18 (TVEEEEDEEEG) are enriched in acidic residues. The segment at residues 147–249 (FCKTLTASDT…ELRLGVRRAA (103 aa)) is a DNA-binding region (TF-B3).

Belongs to the ARF family. Homo and heterodimers. As to expression, expressed in roots, culms, leaves and young panicles.

It localises to the nucleus. Auxin response factors (ARFs) are transcriptional factors that bind specifically to the DNA sequence 5'-TGTCTC-3' found in the auxin-responsive promoter elements (AuxREs). This is Auxin response factor 2 (ARF2) from Oryza sativa subsp. japonica (Rice).